The chain runs to 352 residues: S-norcoclaurine synthase 1 (352 aa).

Residues 200–304 (KPLRTVFNRE…RLSIAAFHDP (105 aa)) enclose the Fe2OG dioxygenase domain. His-228, Asp-230, and His-285 together coordinate Fe cation.

The protein belongs to the iron/ascorbate-dependent oxidoreductase family. Monomer. It depends on Fe cation as a cofactor.

It carries out the reaction (4-hydroxyphenyl)acetaldehyde + dopamine = (S)-norcoclaurine + H2O. Inhibited by O-phenanthroline, but not by EDTA. Functionally, involved in the biosynthesis of the common precursor of all benzylisoquinoline alkaloids such as morphine, sanguinarine, codeine or berberine. Condenses dopamine and phenylacetaldehyde, 3,4-dihydrophenylacetaldehyde or 4-hydroxyphenylacetaldehyde. This chain is S-norcoclaurine synthase 1 (NCS1), found in Coptis japonica (Japanese goldthread).